Reading from the N-terminus, the 331-residue chain is Anthranilate phosphoribosyltransferase (331 aa).

5-phospho-alpha-D-ribose 1-diphosphate-binding positions include Gly79, 82–83, Thr87, 89–92, 107–115, and Ser119; these read GD, NVST, and KHGNYGVSS. Gly79 is an anthranilate binding site. Residue Ser91 coordinates Mg(2+). Asn110 lines the anthranilate pocket. Arg165 contacts anthranilate. Residues Asp223 and Glu224 each contribute to the Mg(2+) site.

Belongs to the anthranilate phosphoribosyltransferase family. As to quaternary structure, homodimer. Mg(2+) is required as a cofactor.

The catalysed reaction is N-(5-phospho-beta-D-ribosyl)anthranilate + diphosphate = 5-phospho-alpha-D-ribose 1-diphosphate + anthranilate. It functions in the pathway amino-acid biosynthesis; L-tryptophan biosynthesis; L-tryptophan from chorismate: step 2/5. Its function is as follows. Catalyzes the transfer of the phosphoribosyl group of 5-phosphorylribose-1-pyrophosphate (PRPP) to anthranilate to yield N-(5'-phosphoribosyl)-anthranilate (PRA). This chain is Anthranilate phosphoribosyltransferase, found in Christiangramia forsetii (strain DSM 17595 / CGMCC 1.15422 / KT0803) (Gramella forsetii).